The chain runs to 350 residues: Chorismate synthase (350 aa).

NADP(+)-binding residues include R39 and R45. FMN-binding positions include 119-121, 213-214, G258, 273-277, and R299; these read RSS, QA, and KPIPT.

This sequence belongs to the chorismate synthase family. As to quaternary structure, homotetramer. FMNH2 serves as cofactor.

It carries out the reaction 5-O-(1-carboxyvinyl)-3-phosphoshikimate = chorismate + phosphate. It functions in the pathway metabolic intermediate biosynthesis; chorismate biosynthesis; chorismate from D-erythrose 4-phosphate and phosphoenolpyruvate: step 7/7. Its function is as follows. Catalyzes the anti-1,4-elimination of the C-3 phosphate and the C-6 proR hydrogen from 5-enolpyruvylshikimate-3-phosphate (EPSP) to yield chorismate, which is the branch point compound that serves as the starting substrate for the three terminal pathways of aromatic amino acid biosynthesis. This reaction introduces a second double bond into the aromatic ring system. This chain is Chorismate synthase, found in Thermoanaerobacter pseudethanolicus (strain ATCC 33223 / 39E) (Clostridium thermohydrosulfuricum).